The following is a 462-amino-acid chain: BBSome complex member bbs-4 (462 aa).

Positions 1-46 (MEASNQDEIIGTDVIPNEQDNPEEVVPEPTSLDVPPPPPERAPSAP) are disordered. TPR repeat units lie at residues 89-122 (EAAF…SGKN), 124-156 (RYFY…MKDN), 199-232 (ATLI…QPDN), 234-266 (EVMN…DPAN), 268-300 (QAIL…SDYN), 335-368 (YKIS…YPQN), and 369-402 (AKAV…KKNP).

Belongs to the BBS4 family. Part of BBSome complex, that contains at least bbs-1, bbs-2, bbs-4, bbs-5, osm-12, bbs-8/ttc-8 and bbs-9. Interacts (via C-terminus) with bbs-5; the interaction is direct.

Its subcellular location is the cytoplasm. It localises to the cytoskeleton. The protein localises to the microtubule organizing center. It is found in the centrosome. The protein resides in the cell projection. Its subcellular location is the cilium membrane. In terms of biological role, component of the BBSome complex. The BBSome complex is thought to function as a coat complex required for sorting of specific membrane proteins to the primary cilia. The BBSome complex is required for ciliogenesis but is dispensable for centriolar satellite function. Required for proper BBSome complex assembly and its ciliary localization. May be required for microtubule anchoring at the centrosome but not for microtubule nucleation. May be required for the dynein-mediated transport of pericentriolar proteins to the centrosome. Required, redundantly with bbs-5, for cilia biogenesis and both the assembly and movement of intraflagellar transport proteins along the ciliary axoneme. Plays a role in the removal of degraded mechanosensory receptors within the cilia. The polypeptide is BBSome complex member bbs-4 (Caenorhabditis elegans).